An 885-amino-acid chain; its full sequence is MSTTAPEQNNPNHYHPQAIEAEQQAKWAADKRFEVSNDISKDANTRYMLSMFPYPSGKLHMGHVRNYTISDVLSRYYRLKGDQVLQPMGWDAFGMPAENAAIANQVAPAKWTFSNIDNMRAQLKTLGLSIDWSREFATCTPEYYRWEQWFFLQLYKKGLVYKKLATVNWDPVDNTVLANEQVVDGKGWRSGAPVEKRDIPMYYFKITDYADELLDDLDKLEGQWPSDVITMQRNWIGRSQGMEVHFPYKNSDDISTLDVFTTRPDTLMGVTYVAVAAEHRLAKLAAEKDPKIAEFCELCKKGSVAEADLAKAEKIGMDTGLTVTHPLTGEEVPVWVANYVLMSYGSGAVMAVPAHDERDFEFANKYNLPIKTVIKTPEDHEGAYTERGTLVNSGEFDGLDFDGSFEAMLAKLEPQKLAARKIQYRLRDWGVSRQRYWGCPIPMINCEYCGNVPVDEADLPIKLPTDVVPDGRGNPLKNIPEFVNTTCPKCGGPAERETDTFDTFMESSWYYARFASPNDDTQMVEKAAADKWLPVDQYVGGVEHAVMHLLYARFYHKLMRDEGLVSGDEPFKNLLTQGMVLAGTLYRDNPEGGKTYYFADDVEISYDDRGQPTQAILKADGQPVTIGKIEKMSKSKNNGVDPQTTIDQYGADTVRLYTLFAAPADQTLEWSDDSLKGPYNFLKKVWRETQSHLEATQELGLQVANLPAASSIDASQLDSLAKGLRRKTHEVITKIDNDLGERLSLNTPVSSLMELANEIGTFISKNQQINEHTLAVQHEALVTLLTLLSVYAPHIGEHLLEKLGVDTTRLRYPEADSAALVQDTITMVVQVNGKVRGKMEVAPGTDAESLKAQAKAIESVAKYLTGDIKKEIVVPNKLVNIVVAG.

The 'HIGH' region motif lies at 53-63 (PYPSGKLHMGH). A 'KMSKS' region motif is present at residues 631–635 (KMSKS). Lys-634 provides a ligand contact to ATP.

Belongs to the class-I aminoacyl-tRNA synthetase family.

Its subcellular location is the cytoplasm. It catalyses the reaction tRNA(Leu) + L-leucine + ATP = L-leucyl-tRNA(Leu) + AMP + diphosphate. The protein is Leucine--tRNA ligase of Psychrobacter sp. (strain PRwf-1).